The following is a 303-amino-acid chain: Vesicle-trafficking protein SEC22c (303 aa).

At 1–183 (MSVIFFACVV…EPAPNFRMEP (183 aa)) the chain is on the cytoplasmic side. Positions 8–119 (CVVRVRDGLP…YAFLEFDSII (112 aa)) constitute a Longin domain. The helical transmembrane segment at 184–204 (VTALGILSLILNIMCAALNLI) threads the bilayer. The Lumenal segment spans residues 205–223 (RGVHLAEHSLQVAHEEIGN). Residues 224–244 (ILAFLVPFVACIFQCYLYLFY) traverse the membrane as a helical segment. The Cytoplasmic segment spans residues 245 to 248 (SPAR). A helical membrane pass occupies residues 249–269 (TMKVVLMLLFICLGNMYLHGL). Residue arginine 270 is a topological domain, lumenal. Residues 271–291 (NLWQILFHIGVAFLSSYQILT) traverse the membrane as a helical segment. The Cytoplasmic segment spans residues 292 to 303 (RQLQEKQSDCGV).

This sequence belongs to the synaptobrevin family. As to expression, ubiquitously expressed.

It localises to the endoplasmic reticulum membrane. Functionally, may be involved in vesicle transport between the ER and the Golgi complex. The sequence is that of Vesicle-trafficking protein SEC22c (SEC22C) from Homo sapiens (Human).